Consider the following 236-residue polypeptide: Small ribosomal subunit protein uS5 (236 aa).

The 64-residue stretch at 61–124 (ENQEILDIAL…NYAKLNIIEI (64 aa)) folds into the S5 DRBM domain.

It belongs to the universal ribosomal protein uS5 family. Part of the 30S ribosomal subunit. Contacts protein S4.

With S4 and S12 plays an important role in translational accuracy. The protein is Small ribosomal subunit protein uS5 of Pyrococcus abyssi (strain GE5 / Orsay).